Consider the following 3302-residue polypeptide: Xin actin-binding repeat-containing protein 2 (3302 aa).

The disordered stretch occupies residues 166–204 (NDSEETLKPSSAMGTSSYTSARQSKETSTSSYSNHSLTS). The span at 173-187 (KPSSAMGTSSYTSAR) shows a compositional bias: polar residues. A compositionally biased stretch (low complexity) spans 191–204 (ETSTSSYSNHSLTS). Xin repeat units lie at residues 306-321 (AGVQQARYVFENTNDS), 341-356 (GEVQSIRWIFENQPLD), 381-396 (GDVKYTTWMFETQPID), 418-433 (GDVCTARWMFETRPLD), 456-471 (GDVKTVRYMFETQQLD), 496-511 (GNVKRSIKCFETQPLY), and 534-549 (GDVRTARWMFETQPLD). S565 carries the post-translational modification Phosphoserine. 2 Xin repeats span residues 572–587 (GEVGRARWLFETQPLE) and 606–621 (IDVSKKCWMFETQPLD). S633 carries the phosphoserine modification. Xin repeat units follow at residues 640-655 (GDVKTTKHLLETLPIE), 677-692 (GDVKHQKWVFETQRLE), 713-728 (GHVKNYTHIFESNNLI), 744-759 (GTVELNKSLFETTPLY), and 782-797 (GDVRSCRWLFETRPID). Position 813 is a phosphoserine (S813). Xin repeat units lie at residues 820–835 (GNVKSARWLFETQPLD), 859–874 (GDVKTCKWLFETQPME), 892–907 (GDVRTCMWLFETQPLD), 930–945 (GDVRTACLLFETENLD), 965–980 (GDVSGMKYKFENQSLD), 1004–1019 (GNVLNCRWLFENQPID), 1040–1055 (GDVRKGCFIFETFSLD), 1077–1092 (GDVKSYKMLFETQPLY), 1115–1130 (GDVRGTRWLFETKPLD), 1152–1167 (GDVSSVRYRFETQPLD), and 1186–1201 (GNVQMNKQLFESEGGD). At S1210 the chain carries Phosphoserine. 3 Xin repeats span residues 1217 to 1232 (GNVKTSTWLFETHSID), 1254 to 1269 (GDVKQAVWLFENQTLD), and 1289 to 1304 (SDVKTTTWLFETTPIH). Residue S1573 is modified to Phosphoserine. Disordered stretches follow at residues 1848–1882 (VSASMSRKKSLKTKESENVRESKDDVSSTQSVDKT), 1920–1939 (AETQSYRPDPTQHPVSNPAG), 1957–2002 (EKQN…APDK), 2039–2296 (YPDC…KPYM), 2311–2378 (RQQR…SKAV), 2546–2593 (YAAK…ESRV), and 2626–2687 (NFQQ…RESQ). A compositionally biased stretch (basic and acidic residues) spans 1859–1873 (KTKESENVRESKDDV). T1930 is subject to Phosphothreonine. S1935 is subject to Phosphoserine. A compositionally biased stretch (basic and acidic residues) spans 1957 to 1969 (EKQNSNKDMRKND). Pro residues-rich tracts occupy residues 2051-2062 (LPPPSPPPPPPS) and 2125-2134 (SLPPPPPTAP). Positions 2135–2145 (SQPAHLLSSSV) are enriched in low complexity. S2158 is subject to Phosphoserine. A compositionally biased stretch (basic and acidic residues) spans 2158–2167 (SRKETLDSHQ). An interacts with NEBL region spans residues 2181-2186 (PPTLPK). S2198, S2211, and S2252 each carry phosphoserine. The segment covering 2205 to 2243 (ELERSLSDVEIKTTLSKDQKSSLVAESREHTEAKQEVFR) has biased composition (basic and acidic residues). Composition is skewed to polar residues over residues 2251–2263 (LSISSANSLSQTV) and 2282–2292 (SFPSGSEQQSP). A coiled-coil region spans residues 2303-2328 (LMIAEEKYRQQREELEKQRRESSCHS). Composition is skewed to basic and acidic residues over residues 2311 to 2325 (RQQREELEKQRRESS) and 2333 to 2350 (ETQHRSLSEKEKETELQK). Positions 2626 to 2635 (NFQQTQTQTS) are enriched in polar residues. Over residues 2636–2659 (RIEHKELSQPYSEKKCLRDKDKQQ) the composition is skewed to basic and acidic residues. Positions 2674-2685 (TQKQSSFSSVRE) are enriched in polar residues. 2 coiled-coil regions span residues 2696–2724 (NILEFLRKREELQQILSRVKQFEADSNKS) and 2751–2777 (RVAMENNLEKVKEEIIHIKTQAEEMLV). Positions 2835-2934 (RQVATHSEAA…PSPPRSRSEQ (100 aa)) are disordered. 2 stretches are compositionally biased toward polar residues: residues 2836–2850 (QVATHSEAATHNPAK) and 2891–2903 (KSELSQSPKNNSC). A compositionally biased stretch (basic and acidic residues) spans 2907-2916 (LPRRPMEHTS). Phosphoserine occurs at positions 2987 and 3225. The segment at 3278-3302 (QGNLHNLSKDGLSNGVPRSRPAEFS) is disordered.

It belongs to the Xin family. Interacts with ACTN2. Interacts with F-actin. Interacts with NEBL (via SH3 domain). Interacts with Kcna5/Kv1.5 and Scn5a/Nav1.5; the interactions are required for normal action potential configuration in the heart.

Its subcellular location is the cell junction. Its function is as follows. Protects actin filaments from depolymerization. Required for correct morphology of cell membranes and maturation of intercalated disks of cardiomyocytes via facilitating localization of XIRP1 and CDH2 to the termini of aligned mature cardiomyocytes. Thereby required for correct postnatal heart development and growth regulation that is crucial for overall heart morphology and diastolic function. Required for normal electrical conduction in the heart including formation of the infranodal ventricular conduction system and normal action potential configuration, as a result of its interaction with the cardiac ion channel components Scn5a/Nav1.5 and Kcna5/Kv1.5. Required for regular actin filament spacing of the paracrystalline array in both inner and outer hair cells of the cochlea, thereby required for maintenance of stereocilia morphology. The polypeptide is Xin actin-binding repeat-containing protein 2 (Rattus norvegicus (Rat)).